A 123-amino-acid chain; its full sequence is Large ribosomal subunit protein uL14 (123 aa).

This sequence belongs to the universal ribosomal protein uL14 family. Part of the 50S ribosomal subunit. Forms a cluster with proteins L3 and L19. In the 70S ribosome, L14 and L19 interact and together make contacts with the 16S rRNA in bridges B5 and B8.

Functionally, binds to 23S rRNA. Forms part of two intersubunit bridges in the 70S ribosome. The protein is Large ribosomal subunit protein uL14 of Cronobacter sakazakii (strain ATCC BAA-894) (Enterobacter sakazakii).